Here is a 340-residue protein sequence, read N- to C-terminus: Phenylalanine--tRNA ligase alpha subunit (340 aa).

A Mg(2+)-binding site is contributed by E255.

Belongs to the class-II aminoacyl-tRNA synthetase family. Phe-tRNA synthetase alpha subunit type 1 subfamily. Tetramer of two alpha and two beta subunits. Requires Mg(2+) as cofactor.

It localises to the cytoplasm. It catalyses the reaction tRNA(Phe) + L-phenylalanine + ATP = L-phenylalanyl-tRNA(Phe) + AMP + diphosphate + H(+). This Exiguobacterium sibiricum (strain DSM 17290 / CCUG 55495 / CIP 109462 / JCM 13490 / 255-15) protein is Phenylalanine--tRNA ligase alpha subunit.